The sequence spans 603 residues: Baeyer-Villiger monooxygenase (603 aa).

FAD is bound by residues glutamate 94, threonine 102–tryptophan 105, aspartate 114, tyrosine 120, and valine 164. Histidine 112–aspartate 114 contributes to the NADP(+) binding site. NADP(+) contacts are provided by residues threonine 248 to glutamine 254, arginine 271 to threonine 272, and lysine 386 to arginine 387.

It belongs to the FAD-binding monooxygenase family. It depends on FAD as a cofactor.

In terms of biological role, catalyzes a Baeyer-Villiger oxidation reaction, i.e. the insertion of an oxygen atom into a carbon-carbon bond adjacent to a carbonyl, which converts ketones to esters or lactones using NADPH and/or NADH as an electron donor. Thus, can convert bicyclo[3.2.0]hept-2-en-6-one into the oxidative lactone products 2-oxabicyclo[3.3.0]oct-6-en-3-one and 3-oxabicyclo[3.3.0]oct-6-en-2-one. Is also able to catalyze the sulfoxidation of methyl phenyl sulfide (thioanisole). In Streptomyces coelicolor (strain ATCC BAA-471 / A3(2) / M145), this protein is Baeyer-Villiger monooxygenase.